Here is a 782-residue protein sequence, read N- to C-terminus: Endonuclease MutS2 (782 aa).

Residue 336 to 343 (GPNTGGKT) coordinates ATP. The Smr domain occupies 707–782 (LDLRGYRYDE…GFGVTVVEIK (76 aa)).

It belongs to the DNA mismatch repair MutS family. MutS2 subfamily. As to quaternary structure, homodimer. Binds to stalled ribosomes, contacting rRNA.

Functionally, endonuclease that is involved in the suppression of homologous recombination and thus may have a key role in the control of bacterial genetic diversity. Acts as a ribosome collision sensor, splitting the ribosome into its 2 subunits. Detects stalled/collided 70S ribosomes which it binds and splits by an ATP-hydrolysis driven conformational change. Acts upstream of the ribosome quality control system (RQC), a ribosome-associated complex that mediates the extraction of incompletely synthesized nascent chains from stalled ribosomes and their subsequent degradation. Probably generates substrates for RQC. The polypeptide is Endonuclease MutS2 (Staphylococcus saprophyticus subsp. saprophyticus (strain ATCC 15305 / DSM 20229 / NCIMB 8711 / NCTC 7292 / S-41)).